The sequence spans 395 residues: Chorismate synthase (395 aa).

Positions 40 and 46 each coordinate NADP(+). The disordered stretch occupies residues 98–120; that stretch reads LPREGRNAPLSRPRPGHADLTGM. Residues 134-136, 256-257, Gly301, 316-320, and Arg342 each bind FMN; these read RSS, QA, and KPIPS.

This sequence belongs to the chorismate synthase family. As to quaternary structure, homotetramer. Requires FMNH2 as cofactor.

The enzyme catalyses 5-O-(1-carboxyvinyl)-3-phosphoshikimate = chorismate + phosphate. Its pathway is metabolic intermediate biosynthesis; chorismate biosynthesis; chorismate from D-erythrose 4-phosphate and phosphoenolpyruvate: step 7/7. Its function is as follows. Catalyzes the anti-1,4-elimination of the C-3 phosphate and the C-6 proR hydrogen from 5-enolpyruvylshikimate-3-phosphate (EPSP) to yield chorismate, which is the branch point compound that serves as the starting substrate for the three terminal pathways of aromatic amino acid biosynthesis. This reaction introduces a second double bond into the aromatic ring system. The protein is Chorismate synthase of Bifidobacterium longum subsp. infantis (strain ATCC 15697 / DSM 20088 / JCM 1222 / NCTC 11817 / S12).